The chain runs to 635 residues: Cytoplasmic polyadenylation element-binding protein 4 (635 aa).

Disordered regions lie at residues 1 to 70 (MQDD…TLRL), 149 to 284 (GFGG…GFNT), and 337 to 369 (LFPM…PHQN). Polar residues predominate over residues 14–30 (PQLQQESQEGQDKQTLS). The segment covering 166-182 (PSPHPHFQHPHNQHRRS) has biased composition (basic residues). Over residues 216–231 (GSYQSPSSTPSSTSWS) the composition is skewed to low complexity. Positions 232 to 241 (PGGGYGGWGS) are enriched in gly residues. Positions 254–283 (PLNSISPLKKSFPNNQTQTQKYPRNNSGFN) are enriched in polar residues. Basic and acidic residues predominate over residues 341-353 (EDERSYGEDERSD). RRM domains are found at residues 378-469 (RKVF…PWNL) and 486-568 (KTIF…PYVL).

This sequence belongs to the RRM CPEB family.

The protein resides in the cytoplasm. The protein localises to the cell projection. It localises to the dendrite. It is found in the dendritic spine. Its subcellular location is the postsynaptic density. The protein resides in the axon. The protein localises to the growth cone. It localises to the endoplasmic reticulum. It is found in the perinuclear region. Its function is as follows. Sequence-specific RNA-binding protein that binds to the cytoplasmic polyadenylation element (CPE), an uridine-rich sequence element (consensus sequence 5'-UUUUUAU-3') within the mRNA 3'-UTR. RNA binding results in a clear conformational change analogous to the Venus fly trap mechanism. The sequence is that of Cytoplasmic polyadenylation element-binding protein 4 (cpeb4) from Danio rerio (Zebrafish).